The following is a 222-amino-acid chain: Peptide methionine sulfoxide reductase MsrA 2 (222 aa).

Cys-56 is a catalytic residue.

The protein belongs to the MsrA Met sulfoxide reductase family.

It catalyses the reaction L-methionyl-[protein] + [thioredoxin]-disulfide + H2O = L-methionyl-(S)-S-oxide-[protein] + [thioredoxin]-dithiol. It carries out the reaction [thioredoxin]-disulfide + L-methionine + H2O = L-methionine (S)-S-oxide + [thioredoxin]-dithiol. Functionally, has an important function as a repair enzyme for proteins that have been inactivated by oxidation. Catalyzes the reversible oxidation-reduction of methionine sulfoxide in proteins to methionine. The chain is Peptide methionine sulfoxide reductase MsrA 2 (msrA2) from Nostoc sp. (strain PCC 7120 / SAG 25.82 / UTEX 2576).